We begin with the raw amino-acid sequence, 412 residues long: Protein ALF (412 aa).

Disordered regions lie at residues 1-47 (MDPE…PLPP) and 154-234 (GLSE…GISE). Pro residues predominate over residues 31-47 (PPQPPPPPLPPPQPLPP). Over residues 187–196 (MRQRRRKKVV) the composition is skewed to basic residues. Acidic residues predominate over residues 206–221 (MEEDEDTEEGQEDNED). 3 DNA-binding regions span residues 237 to 241 (REHPF), 306 to 313 (NKPKMRHY), and 377 to 380 (YVPT).

This sequence belongs to the FLO/LFY family. As to expression, expressed in the floral meristem and also in the vegetative meristem.

The protein resides in the nucleus. Probable transcription factor required for the specification of floral meristem identity. The polypeptide is Protein ALF (ALF) (Petunia hybrida (Petunia)).